Reading from the N-terminus, the 203-residue chain is 3-isopropylmalate dehydratase small subunit (203 aa).

It belongs to the LeuD family. LeuD type 1 subfamily. Heterodimer of LeuC and LeuD.

The catalysed reaction is (2R,3S)-3-isopropylmalate = (2S)-2-isopropylmalate. Its pathway is amino-acid biosynthesis; L-leucine biosynthesis; L-leucine from 3-methyl-2-oxobutanoate: step 2/4. In terms of biological role, catalyzes the isomerization between 2-isopropylmalate and 3-isopropylmalate, via the formation of 2-isopropylmaleate. The sequence is that of 3-isopropylmalate dehydratase small subunit from Pelagibacter ubique (strain HTCC1062).